Reading from the N-terminus, the 69-residue chain is Large ribosomal subunit protein uL29 (69 aa).

It belongs to the universal ribosomal protein uL29 family.

In Synechococcus sp. (strain WH7803), this protein is Large ribosomal subunit protein uL29.